Reading from the N-terminus, the 151-residue chain is 3-hydroxyacyl-[acyl-carrier-protein] dehydratase FabZ (151 aa).

Histidine 54 is an active-site residue.

This sequence belongs to the thioester dehydratase family. FabZ subfamily.

Its subcellular location is the cytoplasm. The enzyme catalyses a (3R)-hydroxyacyl-[ACP] = a (2E)-enoyl-[ACP] + H2O. Involved in unsaturated fatty acids biosynthesis. Catalyzes the dehydration of short chain beta-hydroxyacyl-ACPs and long chain saturated and unsaturated beta-hydroxyacyl-ACPs. This is 3-hydroxyacyl-[acyl-carrier-protein] dehydratase FabZ from Cronobacter sakazakii (strain ATCC BAA-894) (Enterobacter sakazakii).